A 66-amino-acid chain; its full sequence is Large ribosomal subunit protein bL35 (66 aa).

A compositionally biased stretch (basic residues) spans 1–46; that stretch reads MPKMKTHRASAKRFKRTANGGLKRHHAFTGHRFHGKTKKQRRHLRK. The disordered stretch occupies residues 1–52; sequence MPKMKTHRASAKRFKRTANGGLKRHHAFTGHRFHGKTKKQRRHLRKPAMVSR.

It belongs to the bacterial ribosomal protein bL35 family.

In Lactobacillus acidophilus (strain ATCC 700396 / NCK56 / N2 / NCFM), this protein is Large ribosomal subunit protein bL35.